A 493-amino-acid chain; its full sequence is C2H2-type transcription factor ffmA (493 aa).

The span at 1–18 (MPMPQYTMQPQYPVSQPH) shows a compositional bias: low complexity. Disordered regions lie at residues 1–50 (MPMP…SRYP), 68–140 (TTVG…YPDG), and 164–202 (EPPRTQVVGSQGRRGILPSVPGRVAPVTNGVNGTAKNTT). 2 stretches are compositionally biased toward polar residues: residues 69 to 79 (TVGSLPPSTFL) and 192 to 202 (NGVNGTAKNTT). The C2H2-type 1 zinc finger occupies 212–234 (FPCPHCNKTYLHAKHLKRHLLRH). The C2H2-type 2; degenerate zinc-finger motif lies at 240-265 (YMCVLCKDTFSRSDILKRHFQKCSIR). Polar residues-rich tracts occupy residues 288-307 (QAAANTAKSLQEEVSSTVPP) and 484-493 (ASTTLGGDGK). Disordered stretches follow at residues 288–316 (QAAANTAKSLQEEVSSTVPPSNGIAGATF) and 468–493 (TTTAGPQEGGMNGLYLASTTLGGDGK).

It belongs to the krueppel C2H2-type zinc-finger protein family.

Its subcellular location is the nucleus. Its function is as follows. Transcription factor that acts in coordination with atrR to regulate the expression of the ABC-type multidrug transporter abcG1 and thus plays a role in azole susceptibility. Regulates the expression of genes involved in fermentation. Is able to promote expression from the yeast FLO11 promoter. The protein is C2H2-type transcription factor ffmA of Aspergillus fumigatus (strain CBS 144.89 / FGSC A1163 / CEA10) (Neosartorya fumigata).